The chain runs to 252 residues: Probable S-methyl-5'-thioinosine phosphorylase (252 aa).

Phosphate-binding positions include Thr-8 and 44–45 (RH). Met-173 contributes to the substrate binding site. Thr-174 serves as a coordination point for phosphate. 197–199 (NYA) serves as a coordination point for substrate.

It belongs to the PNP/MTAP phosphorylase family. MTAP subfamily. Homotrimer.

It catalyses the reaction S-methyl-5'-thioinosine + phosphate = 5-(methylsulfanyl)-alpha-D-ribose 1-phosphate + hypoxanthine. It participates in purine metabolism; purine nucleoside salvage. Functionally, catalyzes the reversible phosphorylation of S-methyl-5'-thioinosine (MTI) to hypoxanthine and 5-methylthioribose-1-phosphate. Involved in the breakdown of S-methyl-5'-thioadenosine (MTA), a major by-product of polyamine biosynthesis. Catabolism of (MTA) occurs via deamination to MTI and phosphorolysis to hypoxanthine. This is Probable S-methyl-5'-thioinosine phosphorylase from Methanocaldococcus jannaschii (strain ATCC 43067 / DSM 2661 / JAL-1 / JCM 10045 / NBRC 100440) (Methanococcus jannaschii).